A 545-amino-acid chain; its full sequence is MPVITLHYEDLEKLTGTDKETIIKRVPMIGADIERVEDEYVDIEFFPDRPDLYSVEGAARAMRGFLDLETGLPEYAIKPYEVSISVSENILKIRPFLGCAVVRGVKFTSSSIKSLMDLQEDLHWGLGRNRKKVSIGVHDLKNVQPPFRYMAVDPSFEFVPLDYTEKMSMTDILEKHPKGTRFAHLVKDFEKYPIILDANDNVLSFPPIINGTLTTVTEQTTDLFIDVTGLGEAVYIALNIVVTALAERGGQIEFVRVIRPGGEELVLPDLEPKERLLTTGEVKALMGMDLTVEEIVKQLERMRFGAAALDKEAVEVKVPAYRADILHNYDLVEDIAKGYGYENIKVKVPETYTPGKSHPISLMRASVNEIMVGLGYYEVMPFTLTSEKINFENMCRPKTDDVTYVLHPISEDQTMIRTTVLPNLLEILSLNQHRELPQKIFEFGEVVSNETTGQHVAAVSIHPQANFTEVYEVVDALMREMMLPYEVKESEDPAFLEGRRADVYVNGKKLGVFGEFHPEVISNFALGYAVVGFELDLNDLIGKKI.

Positions 270 to 346 constitute a B5 domain; that stretch reads LEPKERLLTT…KGYGYENIKV (77 aa). Residues Asp324, Asp330, Glu333, and Asp334 each contribute to the Mg(2+) site.

Belongs to the phenylalanyl-tRNA synthetase beta subunit family. Type 2 subfamily. In terms of assembly, tetramer of two alpha and two beta subunits. The cofactor is Mg(2+).

It localises to the cytoplasm. It carries out the reaction tRNA(Phe) + L-phenylalanine + ATP = L-phenylalanyl-tRNA(Phe) + AMP + diphosphate + H(+). The protein is Phenylalanine--tRNA ligase beta subunit of Methanosarcina acetivorans (strain ATCC 35395 / DSM 2834 / JCM 12185 / C2A).